A 459-amino-acid polypeptide reads, in one-letter code: GTPase Der (459 aa).

2 consecutive EngA-type G domains span residues 3 to 167 (FTLA…PEPV) and 188 to 363 (IRVA…AVWN). GTP contacts are provided by residues 9–16 (GRPNVGKS), 56–60 (DTAGL), 119–122 (NKSE), 194–201 (GRPNAGKS), 241–245 (DTAGL), and 306–309 (NKWD). In terms of domain architecture, KH-like spans 364 to 448 (RRVPTAALNR…PVRITLREKA (85 aa)).

It belongs to the TRAFAC class TrmE-Era-EngA-EngB-Septin-like GTPase superfamily. EngA (Der) GTPase family. Associates with the 50S ribosomal subunit.

Its function is as follows. GTPase that plays an essential role in the late steps of ribosome biogenesis. This chain is GTPase Der, found in Rhodopseudomonas palustris (strain TIE-1).